A 364-amino-acid chain; its full sequence is Inner membrane ABC transporter permease protein YejB (364 aa).

The Periplasmic portion of the chain corresponds to 1 to 8 (MGAYLIRR). Residues 9–29 (LLLVIPTLWAIITINFFIVQI) form a helical membrane-spanning segment. Topologically, residues 30–37 (APGGPVDQ) are cytoplasmic. A helical transmembrane segment spans residues 38-58 (AIAAIEFGNAGVLPGAGGEGV). The Periplasmic segment spans residues 59-135 (RASHAQTGVG…LTLIKDSLPV (77 aa)). The ABC transmembrane type-1 domain maps to 133–348 (LPVSITLGLW…LIGLLLNIVS (216 aa)). A helical membrane pass occupies residues 136–156 (SITLGLWSTLIIYLVSIPLGI). Over 157-172 (RKAVYNGSRFDVWSSA) the chain is Cytoplasmic. Residues 173–193 (FIIIGYAIPAFLFAILLIVFF) form a helical membrane-spanning segment. At 194-224 (AGGSYFDLFPLRGLVSANFDSLPWYQKITDY) the chain is on the periplasmic side. Residues 225 to 245 (LWHITLPVLATVIGGFAALTM) form a helical membrane-spanning segment. The Cytoplasmic portion of the chain corresponds to 246–284 (LTKNSFLDEVRKQYVVTARAKGVSEKNILWKHVFRNAML). Residues 285–305 (LVIAGFPATFISMFFTGSLLI) traverse the membrane as a helical segment. Over 306 to 326 (EVMFSLNGLGLLGYEATVSRD) the chain is Periplasmic. A helical membrane pass occupies residues 327–347 (YPVMFGTLYIFTLIGLLLNIV). The Cytoplasmic segment spans residues 348–364 (SDISYTLVDPRIDFEGR).

Belongs to the binding-protein-dependent transport system permease family. OppBC subfamily.

The protein resides in the cell inner membrane. In terms of biological role, probably part of a binding-protein-dependent transport system. Probably responsible for the translocation of the substrate across the membrane. The protein is Inner membrane ABC transporter permease protein YejB (yejB) of Escherichia coli O157:H7.